The sequence spans 883 residues: Ankyrin repeat and SAM domain-containing protein 6 (883 aa).

10 ANK repeats span residues 8 to 37 (PGLQLLLRACEQGDTDTARRLLEPGADPVA), 68 to 97 (AGNSALQLAAAGGHEPLVRFLLRRGASVNS), 101 to 130 (YGWSALMQAARCGHVSVAHLLLDHGADVNA), 134 to 163 (LGASVLTVASRGGHLGVVKLLLEAGAIVDH), 181 to 210 (LGITALMAAVQHGHEAVVRLLMEWGADPNH), 215 to 244 (VGWSPLMLAALLGKLNVAQQLVEKGANPDH), 282 to 312 (KRRPDIFYALKMGNFQLVKEIADEDPNHVNL), 316 to 345 (DGATPLMLAAVTGHLPLVQLLVEKHADMDK), 350 to 379 (HGWTALMQATYHGNKEIVKYLLNQGADVAL), and 383 to 414 (NGYTAFDLVMLLNDPDTELVRLLASVCMQVNK). The segment at 30-50 (EPGADPVAGPEAGAEPAGPEA) is disordered. 4 disordered regions span residues 414 to 439 (KDRGRPSHRPPLPHSKARQPWSIPVL), 490 to 522 (MRAPPQDRTSHLGPPEAAHATKDSGPGNPRREK), 566 to 773 (SHTC…ITDE), and 852 to 883 (SFESSASNTRAPGNGPSMAGWTRPEETVSSRR). Over residues 566-576 (SHTCHNGKADP) the composition is skewed to basic and acidic residues. Over residues 607–630 (PSISRSPASPASSGSFNHSPHSSG) the composition is skewed to low complexity. Residues 631 to 640 (GASGIGGMSR) are compositionally biased toward gly residues. Position 649 is a phosphoserine (Ser649). The segment covering 649 to 661 (SGGSVDSVLSQIA) has biased composition (polar residues). Low complexity-rich tracts occupy residues 687–711 (SSSPPELPASLPSSGSGSSSGPSSS) and 720–737 (PPSGTSATSKSTSPTLTP). Phosphoserine is present on residues Ser732 and Ser740. Residues 748-768 (SSVSSSSSHRQSKSSGGSSSG) are compositionally biased toward low complexity. The SAM domain maps to 771-834 (TDEDELTGIL…LAAISELNAG (64 aa)). A compositionally biased stretch (polar residues) spans 852-862 (SFESSASNTRA). The span at 874-883 (RPEETVSSRR) shows a compositional bias: basic and acidic residues.

As to quaternary structure, homooligomer. Interacts with NEK8. Central component of a complex containing at least ANKS6, INVS, NEK8 and NPHP3. ANKS6 may organize complex assembly by linking INVS and NPHP3 to NEK8 and INVS may target the complex to the proximal ciliary axoneme. Interacts (via SAM domain) with BICC1 (via KH domains) in an RNA-dependent manner. Interacts (via SAM domain) with ANKS3 (via SAM domain). In terms of processing, hydroxylated at Asn-129, most probably by HIF1AN. This hydroxylation results in decreased NEK8-binding. As to expression, expressed in kidney (at protein level).

It is found in the cell projection. The protein resides in the cilium. It localises to the cytoplasm. In terms of biological role, required for renal function. This is Ankyrin repeat and SAM domain-containing protein 6 (Anks6) from Mus musculus (Mouse).